Reading from the N-terminus, the 240-residue chain is Prolactin-8A6 (240 aa).

Residues Met-1–Ser-30 form the signal peptide. Disulfide bonds link Cys-34–Cys-41, Cys-101–Cys-216, and Cys-233–Cys-240. Residue Asn-212 is glycosylated (N-linked (GlcNAc...) asparagine).

Belongs to the somatotropin/prolactin family. In terms of tissue distribution, expressed specifically in the spongiotrophoblast and trophoblast giant cells from the junctional zone of the chorioallantoic placenta.

It localises to the secreted. This Mus musculus (Mouse) protein is Prolactin-8A6 (Prl8a6).